Consider the following 389-residue polypeptide: TelA-like protein SH1505 (389 aa).

It belongs to the TelA family.

In Staphylococcus haemolyticus (strain JCSC1435), this protein is TelA-like protein SH1505.